A 95-amino-acid polypeptide reads, in one-letter code: uncharacterized protein (95 aa).

The chain crosses the membrane as a helical span at residues 27–47 (SFGLAIIGILLIACEIILFLT).

The protein localises to the membrane. This is an uncharacterized protein from Homo sapiens (Human).